The chain runs to 331 residues: Ribose-phosphate pyrophosphokinase (331 aa).

Asp55–Glu57 contributes to the ATP binding site. Mg(2+)-binding residues include His148 and Asp187. The active site involves Lys211. Residues Arg213, Asp237, and Asp241–Thr245 contribute to the D-ribose 5-phosphate site.

It belongs to the ribose-phosphate pyrophosphokinase family. Class I subfamily. In terms of assembly, homohexamer. Mg(2+) serves as cofactor.

It localises to the cytoplasm. The enzyme catalyses D-ribose 5-phosphate + ATP = 5-phospho-alpha-D-ribose 1-diphosphate + AMP + H(+). It functions in the pathway metabolic intermediate biosynthesis; 5-phospho-alpha-D-ribose 1-diphosphate biosynthesis; 5-phospho-alpha-D-ribose 1-diphosphate from D-ribose 5-phosphate (route I): step 1/1. Its function is as follows. Involved in the biosynthesis of the central metabolite phospho-alpha-D-ribosyl-1-pyrophosphate (PRPP) via the transfer of pyrophosphoryl group from ATP to 1-hydroxyl of ribose-5-phosphate (Rib-5-P). The protein is Ribose-phosphate pyrophosphokinase of Prochlorococcus marinus subsp. pastoris (strain CCMP1986 / NIES-2087 / MED4).